The chain runs to 522 residues: Glutamate--cysteine ligase, chloroplastic (522 aa).

Disulfide bonds link C186/C406 and C349/C364.

The protein belongs to the carboxylate-amine ligase family. Glutamate--cysteine ligase type 2 subfamily. In terms of assembly, homodimer or monomer when oxidized or reduced, respectively. Post-translationally, the Cys-186-Cys-406 disulfide bridge is known to modulate the enzyme activity according to the redox status. The oxidized form constitutes the active enzyme. In terms of tissue distribution, abundant in leaves and roots. Expressed to a high level in leaf trichomes of mature plant.

The protein localises to the plastid. It is found in the chloroplast. It catalyses the reaction L-cysteine + L-glutamate + ATP = gamma-L-glutamyl-L-cysteine + ADP + phosphate + H(+). Its pathway is sulfur metabolism; glutathione biosynthesis; glutathione from L-cysteine and L-glutamate: step 1/2. With respect to regulation, feedback inhibition by glutathione. Inhibited by buthionine sulfoximine and cystamine. Its function is as follows. Seems to play an important role in controlling the expression of resistance responses like the regulation of salicylic acid (SA) and phytoalexin (camalexin) production. Involved in resistance to fungal and bacterial pathogens. Required for the regulation of cell proliferation in root apical meristems through the GSH-dependent developmental pathway. Also participates in the detoxification process, the antioxidant response and is essential for embryo development and proper seed maturation. The polypeptide is Glutamate--cysteine ligase, chloroplastic (GSH1) (Arabidopsis thaliana (Mouse-ear cress)).